The primary structure comprises 365 residues: Outer capsid protein sigma-3 (365 aa).

Residues 51–73 (CMHCLGVVGSLQRKLKHLPHHKC) form a CCHC-type zinc finger.

It belongs to the orthoreovirus sigma-3 protein family. Heterohexamer of three sigma-3 and three Mu-1 proteins. The RNA-binding form is probably a homodimer. In terms of processing, cleaved during virus the endosomal proteolytic disassembly of the outer capsid.

The protein localises to the virion. Its subcellular location is the host cytoplasm. It is found in the host nucleus. Functionally, stimulates translation by blocking the activation of the dsRNA-dependent protein kinase EIF2AK2/PKR, thereby inhibiting the host interferon response. Sigma3 prevents the activation of EIF2AK2 by competing with the kinase for dsRNA-binding. In terms of biological role, the viral outer shell polypeptides, of which sigma-3 is one, impose structural constraints that prevent elongation of nascent transcripts by the RNA-dependent RNA polymerase lambda-3. This Mammalia (T2J) protein is Outer capsid protein sigma-3 (S4).